The chain runs to 35 residues: Photosystem II reaction center protein T (35 aa).

The chain crosses the membrane as a helical span at residues 3-23 (ALVYTFLLVGTLGIIFFAIFF).

This sequence belongs to the PsbT family. In terms of assembly, PSII is composed of 1 copy each of membrane proteins PsbA, PsbB, PsbC, PsbD, PsbE, PsbF, PsbH, PsbI, PsbJ, PsbK, PsbL, PsbM, PsbT, PsbY, PsbZ, Psb30/Ycf12, at least 3 peripheral proteins of the oxygen-evolving complex and a large number of cofactors. It forms dimeric complexes.

The protein resides in the plastid. It localises to the chloroplast thylakoid membrane. Functionally, found at the monomer-monomer interface of the photosystem II (PS II) dimer, plays a role in assembly and dimerization of PSII. PSII is a light-driven water plastoquinone oxidoreductase, using light energy to abstract electrons from H(2)O, generating a proton gradient subsequently used for ATP formation. This is Photosystem II reaction center protein T from Zygnema circumcarinatum (Green alga).